The sequence spans 448 residues: Fibulin-5 (448 aa).

A signal peptide spans 1–23 (MPGIKRILTVTILALCLPSPGNA). In terms of domain architecture, EGF-like 1; calcium-binding spans 42-82 (DIDECRTIPEACRGDMMCVNQNGGYLCIPRTNPVYRGPYSN). Disulfide bonds link Cys46–Cys59, Cys53–Cys68, Cys131–Cys144, Cys138–Cys153, Cys155–Cys166, Cys172–Cys181, Cys177–Cys190, Cys192–Cys205, Cys211–Cys221, Cys217–Cys230, Cys232–Cys245, Cys251–Cys262, Cys258–Cys271, Cys273–Cys286, Cys292–Cys305, Cys299–Cys314, and Cys320–Cys332. A Cell attachment site motif is present at residues 54–56 (RGD). The 41-residue stretch at 127-167 (DVDECATDSHQCNPTQICINTEGGYTCSCTDGYWLLEGQCL) folds into the EGF-like 2; calcium-binding domain. In terms of domain architecture, EGF-like 3; calcium-binding spans 168–206 (DIDECRYGYCQQLCANVPGSYSCTCNPGFTLNEDGRSCQ). Positions 207-246 (DVNECATENPCVQTCVNTYGSFICRCDPGYELEEDGVHCS) constitute an EGF-like 4; calcium-binding domain. The segment at 245–448 (CSDMDECSFS…LRIYVSQYPF (204 aa)) is interaction with LOXL1. One can recognise an EGF-like 5; calcium-binding domain in the interval 247 to 287 (DMDECSFSEFLCQHECVNQPGTYFCSCPPGYILLDDNRSCQ). Asn283 and Asn296 each carry an N-linked (GlcNAc...) asparagine glycan. The 46-residue stretch at 288 to 333 (DINECEHRNHTCNLQQTCYNLQGGFKCIDPIRCEEPYLRISDNRCM) folds into the EGF-like 6; calcium-binding domain.

This sequence belongs to the fibulin family. Homodimer. Monomer, homodimerizes in presence of Ca(2+). Interacts with ELN. Interacts (via N-terminus) with the integrins ITGAV/ITGB3, ITGAV/ITGB5 and ITGA9/ITGB1. Interacts with FBN1 (via N-terminal domain). Forms a ternary complex with ELN and FBN1. Interacts with EFEMP2 with moderate affinity. Interacts with LOXL1. In terms of processing, N-glycosylated. As to expression, expressed in skin fibroblasts (at protein level). Expressed predominantly in heart, ovary, and colon but also in kidney, pancreas, testis, lung and placenta. Not detectable in brain, liver, thymus, prostate, or peripheral blood leukocytes.

The protein localises to the secreted. The protein resides in the extracellular space. Its subcellular location is the extracellular matrix. In terms of biological role, essential for elastic fiber formation, is involved in the assembly of continuous elastin (ELN) polymer and promotes the interaction of microfibrils and ELN. Stabilizes and organizes elastic fibers in the skin, lung and vasculature. Promotes adhesion of endothelial cells through interaction of integrins and the RGD motif. Vascular ligand for integrin receptors which may play a role in vascular development and remodeling. May act as an adapter that mediates the interaction between FBN1 and ELN. The polypeptide is Fibulin-5 (FBLN5) (Homo sapiens (Human)).